Here is a 469-residue protein sequence, read N- to C-terminus: Ribulose bisphosphate carboxylase large chain (469 aa).

Positions M1 to S2 are excised as a propeptide. Position 3 is an N-acetylproline (P3). N6,N6,N6-trimethyllysine is present on K14. The substrate site is built by N123 and T173. The active-site Proton acceptor is the K175. A substrate-binding site is contributed by K177. Mg(2+)-binding residues include K201, D203, and E204. Residue K201 is modified to N6-carboxylysine. H294 serves as the catalytic Proton acceptor. The substrate site is built by R295, H327, and S379.

This sequence belongs to the RuBisCO large chain family. Type I subfamily. As to quaternary structure, heterohexadecamer of 8 large chains and 8 small chains; disulfide-linked. The disulfide link is formed within the large subunit homodimers. It depends on Mg(2+) as a cofactor. In terms of processing, the disulfide bond which can form in the large chain dimeric partners within the hexadecamer appears to be associated with oxidative stress and protein turnover.

It is found in the plastid. The protein localises to the chloroplast. The catalysed reaction is 2 (2R)-3-phosphoglycerate + 2 H(+) = D-ribulose 1,5-bisphosphate + CO2 + H2O. The enzyme catalyses D-ribulose 1,5-bisphosphate + O2 = 2-phosphoglycolate + (2R)-3-phosphoglycerate + 2 H(+). In terms of biological role, ruBisCO catalyzes two reactions: the carboxylation of D-ribulose 1,5-bisphosphate, the primary event in carbon dioxide fixation, as well as the oxidative fragmentation of the pentose substrate in the photorespiration process. Both reactions occur simultaneously and in competition at the same active site. This chain is Ribulose bisphosphate carboxylase large chain, found in Iris ensata (Japanese iris).